The following is a 225-amino-acid chain: Imidazole glycerol phosphate synthase subunit HisH (225 aa).

The 216-residue stretch at 5–220 (KNVIVDTGCA…LELDSTELNQ (216 aa)) folds into the Glutamine amidotransferase type-1 domain. Catalysis depends on Cys-80, which acts as the Nucleophile. Residues His-195 and Glu-197 contribute to the active site.

Heterodimer of HisH and HisF.

Its subcellular location is the cytoplasm. It catalyses the reaction 5-[(5-phospho-1-deoxy-D-ribulos-1-ylimino)methylamino]-1-(5-phospho-beta-D-ribosyl)imidazole-4-carboxamide + L-glutamine = D-erythro-1-(imidazol-4-yl)glycerol 3-phosphate + 5-amino-1-(5-phospho-beta-D-ribosyl)imidazole-4-carboxamide + L-glutamate + H(+). The catalysed reaction is L-glutamine + H2O = L-glutamate + NH4(+). It functions in the pathway amino-acid biosynthesis; L-histidine biosynthesis; L-histidine from 5-phospho-alpha-D-ribose 1-diphosphate: step 5/9. Its function is as follows. IGPS catalyzes the conversion of PRFAR and glutamine to IGP, AICAR and glutamate. The HisH subunit catalyzes the hydrolysis of glutamine to glutamate and ammonia as part of the synthesis of IGP and AICAR. The resulting ammonia molecule is channeled to the active site of HisF. This chain is Imidazole glycerol phosphate synthase subunit HisH, found in Colwellia psychrerythraea (strain 34H / ATCC BAA-681) (Vibrio psychroerythus).